A 1503-amino-acid chain; its full sequence is ABC multidrug transporter MDR3 (1503 aa).

Residues 1–46 (MAPTEEANVTKPTGELRPDEKLNYEEDVKCSGSSSTTVGKTAYDTD) are disordered. N-linked (GlcNAc...) asparagine glycosylation is present at Asn8. A compositionally biased stretch (basic and acidic residues) spans 14–29 (GELRPDEKLNYEEDVK). The 256-residue stretch at 153-408 (LKAWSGIMSM…FIEMGFDCPS (256 aa)) folds into the ABC transporter 1 domain. 2 N-linked (GlcNAc...) asparagine glycosylation sites follow: Asn332 and Asn463. Helical transmembrane passes span 519 to 539 (MTLT…SVFY), 554 to 574 (LLFF…LTLW), 599 to 619 (ILVD…IIYF), 628 to 648 (GHFF…SNVF), and 662 to 682 (LVPT…TIPV). N-linked (GlcNAc...) asparagine glycosylation occurs at Asn729. The helical transmembrane segment at 771–791 (GIIVAFFLFFLFVYITATELV) threads the bilayer. Residues 816–838 (KKKQDPEAASTQEKQPVETSGHD) are disordered. Positions 824-833 (ASTQEKQPVE) are enriched in polar residues. An ABC transporter 2 domain is found at 850–1093 (FHWESVCYDI…LIEYFESKGA (244 aa)). Position 886 to 893 (886 to 893 (GVSGAGKT)) interacts with ATP. A run of 6 helical transmembrane segments spans residues 1186–1206 (YIYS…FTFY), 1222–1242 (IFMF…YFVI), 1259–1279 (WIAF…LLTV), 1310–1330 (LLIL…IAGI), 1346–1366 (LTLV…FWIF), and 1458–1478 (IGIL…LYWL). N-linked (GlcNAc...) asparagine glycosylation is present at Asn1499.

It belongs to the ABC transporter superfamily. ABCG family. PDR (TC 3.A.1.205) subfamily.

It is found in the cell membrane. The enzyme catalyses itraconazole(in) + ATP + H2O = itraconazole(out) + ADP + phosphate + H(+). It carries out the reaction voriconazole(in) + ATP + H2O = voriconazole(out) + ADP + phosphate + H(+). It catalyses the reaction fluconazole(in) + ATP + H2O = fluconazole(out) + ADP + phosphate + H(+). The catalysed reaction is (2R,4S)-ketoconazole(in) + ATP + H2O = (2R,4S)-ketoconazole(out) + ADP + phosphate + H(+). The enzyme catalyses (2S,4R)-ketoconazole(in) + ATP + H2O = (2S,4R)-ketoconazole(out) + ADP + phosphate + H(+). It carries out the reaction (R)-miconazole(in) + ATP + H2O = (R)-miconazole(out) + ADP + phosphate + H(+). It catalyses the reaction (S)-miconazole(in) + ATP + H2O = (S)-miconazole(out) + ADP + phosphate + H(+). Azole transport activity is inhibited by milbemycin oxime. Functionally, pleiotropic ABC efflux transporter involved in the modulation susceptibility to azoles, including fluconazole, itraconazole, ketoconazole, miconazole and voriconazole. The sequence is that of ABC multidrug transporter MDR3 from Trichophyton rubrum (strain ATCC MYA-4607 / CBS 118892) (Athlete's foot fungus).